The sequence spans 449 residues: Adenylosuccinate synthetase (449 aa).

Residues 37–43 and 65–67 contribute to the GTP site; these read GDEGKGK and GHT. Asp38 (proton acceptor) is an active-site residue. Residues Asp38 and Gly65 each contribute to the Mg(2+) site. IMP contacts are provided by residues 38–41, 63–66, Thr155, Arg169, Asn247, Thr262, and Arg326; these read DEGK and NAGH. The active-site Proton donor is His66. 322–328 provides a ligand contact to substrate; it reads VTTKRKR. Residues Arg328, 354–356, and 437–439 contribute to the GTP site; these read KLD and GVG.

The protein belongs to the adenylosuccinate synthetase family. In terms of assembly, homodimer. Mg(2+) serves as cofactor.

It is found in the cytoplasm. The enzyme catalyses IMP + L-aspartate + GTP = N(6)-(1,2-dicarboxyethyl)-AMP + GDP + phosphate + 2 H(+). It functions in the pathway purine metabolism; AMP biosynthesis via de novo pathway; AMP from IMP: step 1/2. Plays an important role in the de novo pathway and in the salvage pathway of purine nucleotide biosynthesis. Catalyzes the first committed step in the biosynthesis of AMP from IMP. The polypeptide is Adenylosuccinate synthetase (Drosophila willistoni (Fruit fly)).